The sequence spans 494 residues: Tripartite motif-containing protein 5 (494 aa).

An N-acetylalanine modification is found at alanine 2. The RING-type zinc finger occupies 15–59; that stretch reads CPICLELLTQPLSLDCGHSFCQACLTANHKTSMPDEGERSCPVCR. A Phosphoserine modification is found at serine 86. The B box-type zinc-finger motif lies at 91-133; it reads QKVDHCARHGEKLLLFCREDRKVICWLCERSQEHRGHHTFLTE. Residues cysteine 96, histidine 99, cysteine 118, and histidine 124 each coordinate Zn(2+). Residues 132 to 241 adopt a coiled-coil conformation; that stretch reads TEEVAQEYQV…LISDLEHRLQ (110 aa). The interval 186-199 is required for interaction with GABARAP and for autophagy; sequence FEQLRHILDWVESN. Residues 282–494 enclose the B30.2/SPRY domain; that stretch reads LKVMLKKLRE…VPMTLCSPSS (213 aa).

The protein belongs to the TRIM/RBCC family. As to quaternary structure, can form homodimers and homotrimers. In addition to lower-order dimerization, also exhibits a higher-order multimerization and both low- and high-order multimerizations are essential for its restriction activity. Interacts with BTBD1 and BTBD2. Interacts with PSMC4, PSMC5, PSMD7 and HSPA8/HSC70. Interacts (via B30.2/SPRY domain) with HSPA1A/B. Interacts with PSMC2, MAP3K7/TAK1, TAB2 and TAB3. Interacts with SQSTM1. Interacts with TRIM6 and TRIM34. Interacts with ULK1 (phosphorylated form), GABARAP, GABARAPL1, GABARAPL2, MAP1LC3A, MAP1LC3C and BECN1. Degraded in a proteasome-independent fashion in the absence of viral infection but in a proteasome-dependent fashion following exposure to restriction sensitive virus. Post-translationally, autoubiquitinated in a RING finger- and UBE2D2-dependent manner. Monoubiquitinated by TRIM21. Deubiquitinated by Yersinia YopJ. Ubiquitination may not lead to proteasomal degradation.

It is found in the cytoplasm. The protein resides in the nucleus. The enzyme catalyses S-ubiquitinyl-[E2 ubiquitin-conjugating enzyme]-L-cysteine + [acceptor protein]-L-lysine = [E2 ubiquitin-conjugating enzyme]-L-cysteine + N(6)-ubiquitinyl-[acceptor protein]-L-lysine.. It participates in protein modification; protein ubiquitination. Its function is as follows. Capsid-specific restriction factor that prevents infection from non-host-adapted retroviruses. Blocks viral replication early in the life cycle, after viral entry but before reverse transcription. In addition to acting as a capsid-specific restriction factor, also acts as a pattern recognition receptor that activates innate immune signaling in response to the retroviral capsid lattice. Binding to the viral capsid triggers its E3 ubiquitin ligase activity, and in concert with the heterodimeric ubiquitin conjugating enzyme complex UBE2V1-UBE2N (also known as UBC13-UEV1A complex) generates 'Lys-63'-linked polyubiquitin chains, which in turn are catalysts in the autophosphorylation of the MAP3K7/TAK1 complex (includes TAK1, TAB2, and TAB3). Activation of the MAP3K7/TAK1 complex by autophosphorylation results in the induction and expression of NF-kappa-B and MAPK-responsive inflammatory genes, thereby leading to an innate immune response in the infected cell. Plays a role in regulating autophagy through activation of autophagy regulator BECN1 by causing its dissociation from its inhibitors BCL2 and TAB2. The chain is Tripartite motif-containing protein 5 (TRIM5) from Nomascus leucogenys (Northern white-cheeked gibbon).